Reading from the N-terminus, the 211-residue chain is 1-deoxy-D-xylulose 5-phosphate reductoisomerase (211 aa).

Asp-14 serves as a coordination point for Mn(2+). 1-deoxy-D-xylulose 5-phosphate contacts are provided by Ser-15, Glu-16, Ser-40, His-63, Ser-76, Asn-81, Lys-82, and Glu-85. A Mn(2+)-binding site is contributed by Glu-16. Residue Glu-85 participates in Mn(2+) binding.

It belongs to the DXR family. It depends on Mn(2+) as a cofactor. Requires Mg(2+) as cofactor. Mostly expressed in flowers and, to a lower extent, in leaves.

It localises to the plastid. Its subcellular location is the chloroplast stroma. It carries out the reaction 2-C-methyl-D-erythritol 4-phosphate + NADP(+) = 1-deoxy-D-xylulose 5-phosphate + NADPH + H(+). It participates in isoprenoid biosynthesis; isopentenyl diphosphate biosynthesis via DXP pathway; isopentenyl diphosphate from 1-deoxy-D-xylulose 5-phosphate: step 1/6. Functionally, enzyme of the plastid non-mevalonate pathway for isoprenoid biosynthesis that catalyzes the NADPH-dependent rearrangement and reduction of 1-deoxy-D-xylulose-5-phosphate (DXP) to 2-C-methyl-D-erythritol 4-phosphate (MEP). Required for chloroplast development. The polypeptide is 1-deoxy-D-xylulose 5-phosphate reductoisomerase (Thymus vulgaris (Thyme)).